We begin with the raw amino-acid sequence, 161 residues long: Ribosome maturation factor RimP (161 aa).

The protein belongs to the RimP family.

Its subcellular location is the cytoplasm. Its function is as follows. Required for maturation of 30S ribosomal subunits. This chain is Ribosome maturation factor RimP, found in Janthinobacterium sp. (strain Marseille) (Minibacterium massiliensis).